The sequence spans 421 residues: 2-deoxystreptamine N-acetyl-D-glucosaminyltransferase (421 aa).

This sequence belongs to the glycosyltransferase group 1 family. Glycosyltransferase 4 subfamily.

The catalysed reaction is 2-deoxystreptamine + UDP-N-acetyl-alpha-D-glucosamine = 2'-N-acetylparomamine + UDP + H(+). Its pathway is antibiotic biosynthesis; neomycin biosynthesis. Glycosyltransferase involved in the biosynthesis of neomycin by mediating conversion of 2-deoxystreptamine (2-DOS) to 2'-N-acetylparomamine using UDP-alpha-D-glucosamine as sugar donor. This is 2-deoxystreptamine N-acetyl-D-glucosaminyltransferase (neoD) from Streptomyces fradiae (Streptomyces roseoflavus).